The primary structure comprises 336 residues: D-alanine--D-alanine ligase (336 aa).

The ATP-grasp domain occupies 124 to 330 (KMWFSALGIP…FTEYLSLVIK (207 aa)). 154-209 (ALENWGSIFVKAASQGSSVGCYKVDDSSKVAGVLKDAFGYAPYVIVEKTIKARELE) is a binding site for ATP. Residues Asp284, Glu297, and Asn299 each contribute to the Mg(2+) site.

The protein belongs to the D-alanine--D-alanine ligase family. The cofactor is Mg(2+). It depends on Mn(2+) as a cofactor.

It localises to the cytoplasm. It carries out the reaction 2 D-alanine + ATP = D-alanyl-D-alanine + ADP + phosphate + H(+). Its pathway is cell wall biogenesis; peptidoglycan biosynthesis. Cell wall formation. This is D-alanine--D-alanine ligase from Shewanella sp. (strain MR-7).